The sequence spans 342 residues: tRNA N6-adenosine threonylcarbamoyltransferase (342 aa).

Residues H111 and H115 each contribute to the Fe cation site. Residues 133–137 (AVSGG), D166, G179, D183, and N272 contribute to the substrate site. D300 provides a ligand contact to Fe cation.

This sequence belongs to the KAE1 / TsaD family. The cofactor is Fe(2+).

The protein resides in the cytoplasm. The catalysed reaction is L-threonylcarbamoyladenylate + adenosine(37) in tRNA = N(6)-L-threonylcarbamoyladenosine(37) in tRNA + AMP + H(+). Its function is as follows. Required for the formation of a threonylcarbamoyl group on adenosine at position 37 (t(6)A37) in tRNAs that read codons beginning with adenine. Is involved in the transfer of the threonylcarbamoyl moiety of threonylcarbamoyl-AMP (TC-AMP) to the N6 group of A37, together with TsaE and TsaB. TsaD likely plays a direct catalytic role in this reaction. This chain is tRNA N6-adenosine threonylcarbamoyltransferase, found in Geobacter sp. (strain M21).